The following is a 185-amino-acid chain: MTTPNKTPPGADPKQLERTGTVREIGSQAVWSLSSCKPGFGVDQLRDDNLETYWQSDGSQPHLVNLQFRRKTTVKTLCIYADYKSDESYTPSKISVRVGNNFHNLQEIRQLELVEPSGWIHVPLTDNHKKPTRTFMIQIAVLANHQNGRDTHMRQIKIYTPVEESSIGKFPRCTTIDFMMYRSIR.

Position 2 is an N-acetylthreonine (Thr-2). The 184-residue stretch at 2 to 185 (TTPNKTPPGA…IDFMMYRSIR (184 aa)) folds into the DOC domain. Lys-169 carries the post-translational modification N6-acetyllysine.

This sequence belongs to the APC10 family. The mammalian APC/C is composed at least of 14 distinct subunits ANAPC1, ANAPC2, CDC27/APC3, ANAPC4, ANAPC5, CDC16/APC6, ANAPC7, CDC23/APC8, ANAPC10, ANAPC11, CDC26/APC12, ANAPC13, ANAPC15 and ANAPC16 that assemble into a complex of at least 19 chains with a combined molecular mass of around 1.2 MDa; APC/C interacts with FZR1 and FBXO5. The C-terminus of APC10 binds to CDC27/APC3. Interacts with PIWIL1; interaction only takes place when PIWIL1 binds piRNA. Interacts with FBXO43; the interaction is direct.

The protein operates within protein modification; protein ubiquitination. In terms of biological role, component of the anaphase promoting complex/cyclosome (APC/C), a cell cycle-regulated E3 ubiquitin ligase that controls progression through mitosis and the G1 phase of the cell cycle. The APC/C complex acts by mediating ubiquitination and subsequent degradation of target proteins: it mainly mediates the formation of 'Lys-11'-linked polyubiquitin chains and, to a lower extent, the formation of 'Lys-48'- and 'Lys-63'-linked polyubiquitin chains. The APC/C complex catalyzes assembly of branched 'Lys-11'-/'Lys-48'-linked branched ubiquitin chains on target proteins. The protein is Anaphase-promoting complex subunit 10 (ANAPC10) of Bos taurus (Bovine).